The following is a 107-amino-acid chain: Nucleoid-associated protein Mlg_1509 (107 aa).

The protein belongs to the YbaB/EbfC family. In terms of assembly, homodimer.

The protein resides in the cytoplasm. It is found in the nucleoid. Functionally, binds to DNA and alters its conformation. May be involved in regulation of gene expression, nucleoid organization and DNA protection. This chain is Nucleoid-associated protein Mlg_1509, found in Alkalilimnicola ehrlichii (strain ATCC BAA-1101 / DSM 17681 / MLHE-1).